The following is an 873-amino-acid chain: Protein translocase subunit SecA (873 aa).

Residues Q85, 103–107 (GEGKT), and D492 contribute to the ATP site. Positions 835-856 (RYAEEEGKQPIRKENQIGRNDD) are enriched in basic and acidic residues. Residues 835 to 873 (RYAEEEGKQPIRKENQIGRNDDCPCGSGKKYKKCCGKNA) are disordered. Positions 857, 859, 868, and 869 each coordinate Zn(2+). The segment covering 863–873 (KKYKKCCGKNA) has biased composition (basic residues).

The protein belongs to the SecA family. As to quaternary structure, monomer and homodimer. Part of the essential Sec protein translocation apparatus which comprises SecA, SecYEG and auxiliary proteins SecDF. Other proteins may also be involved. Requires Zn(2+) as cofactor.

The protein localises to the cell membrane. It localises to the cytoplasm. The enzyme catalyses ATP + H2O + cellular proteinSide 1 = ADP + phosphate + cellular proteinSide 2.. In terms of biological role, part of the Sec protein translocase complex. Interacts with the SecYEG preprotein conducting channel. Has a central role in coupling the hydrolysis of ATP to the transfer of proteins into and across the cell membrane, serving as an ATP-driven molecular motor driving the stepwise translocation of polypeptide chains across the membrane. This chain is Protein translocase subunit SecA, found in Desulforamulus reducens (strain ATCC BAA-1160 / DSM 100696 / MI-1) (Desulfotomaculum reducens).